The primary structure comprises 178 residues: Large ribosomal subunit protein uL6 (178 aa).

It belongs to the universal ribosomal protein uL6 family. As to quaternary structure, part of the 50S ribosomal subunit.

In terms of biological role, this protein binds to the 23S rRNA, and is important in its secondary structure. It is located near the subunit interface in the base of the L7/L12 stalk, and near the tRNA binding site of the peptidyltransferase center. In Staphylococcus aureus (strain Mu3 / ATCC 700698), this protein is Large ribosomal subunit protein uL6.